The primary structure comprises 352 residues: Schlafen-like protein 4 (352 aa).

Residues 87 to 235 (FEYQSNFSEV…SDKVYQISSG (149 aa)) form an SLFN-like fold region. A helical transmembrane segment spans residues 326–343 (IQNIGWIFFGTALSCCIY).

This sequence belongs to the Schlafen family. In terms of assembly, component of the PUCH (precursor of 21U RNA 5'-end cleavage holoenzyme) complex; consisting of tofu-1, tofu-2 and either slfl-3 or slfl-4.

It localises to the membrane. Its function is as follows. Component of the trimeric PUCH (precursor of 21U RNA 5'-end cleavage holoenzyme) complex, that acts as an endoribonuclease processing the 5'-end of precursor Piwi-interacting RNAs (piRNAs). The PUCH complex consists of tofu-1, tofu-2 and either slfl-3 or slfl-4, where tofu-2 exhibits endoribonuclease activity. PUCH-mediated processing strictly requires a 7-methyl-G cap (m7 G-cap) and an uracil at position three (U3). PUCH also exhibits a strict bias for piRNA precursors with an A or G at position 1. Mature piRNA production is enhanced by the interaction of PUCH with the PETISCO complex, which is stabilizing piRNA precursors and allows their processing by PUCH. The protein is Schlafen-like protein 4 of Caenorhabditis elegans.